A 346-amino-acid polypeptide reads, in one-letter code: Histidinol-phosphate aminotransferase (346 aa).

An N6-(pyridoxal phosphate)lysine modification is found at lysine 209.

Belongs to the class-II pyridoxal-phosphate-dependent aminotransferase family. Histidinol-phosphate aminotransferase subfamily. In terms of assembly, homodimer. Pyridoxal 5'-phosphate serves as cofactor.

It catalyses the reaction L-histidinol phosphate + 2-oxoglutarate = 3-(imidazol-4-yl)-2-oxopropyl phosphate + L-glutamate. It functions in the pathway amino-acid biosynthesis; L-histidine biosynthesis; L-histidine from 5-phospho-alpha-D-ribose 1-diphosphate: step 7/9. The protein is Histidinol-phosphate aminotransferase of Aliivibrio fischeri (strain ATCC 700601 / ES114) (Vibrio fischeri).